The chain runs to 739 residues: MKNSEIRPEKLHLRKLRKSLRKIRMKCLCSGEQMRHREEEDKKSEVGVGRDYNGSSALSTAESENAKKLDNGNIEEAELSLRETSSLNYEEARALLGRIEYQKGNIEAALRVFEGIDINGITVKMKTALTVREDRKHRRRSKGGFSTAPSPAMSKHAVSLLFEAIFLKAKSLQRLGRFQEAAESCRVILDIVETSLAEGASDNVTGDIKLQETLTKAVELLPELWKLADSPRDAILSYRRALLNHWKLDPETTARIQKEYAVFLLYSGEEAVPPNLRSQTEGSFIPRNNVEEAILLLMLLLRKVNLKRISWDAAILDHLSFALTIAGDLTALAKQFEELSPELLDQRELYHTLSLCYQGAGEGLVALGLLRKLFSEREDPNRTSGLLMASKICGERSGLAEEGLDYARKAIGNLGKECSQLDGAARFVLGITLTESSRMAVTETERIARQSEGIQALESADMTNPRVVHRLALENAEQRKLDSALAYAKEALKLGAESDLEVWLLLARVLSAQKRFSDAETIVDAALNETGKWEQGKLLRLKAKLRLAKGEVKDAIKTYTQLLALLQVQSKSFNSAKKLPKGYVKELMSLELGTWHDLAHIYINLSQWRDAESCLSRSRLIAPYSSVRYHIEGVLYNRRGQLEEAMEAFTTALDIDPMHVPSLTSKAEILLEVGNRSGIAVVRSFLMEALRIDRLNHSAWYNLGKMFKAEGSVSSMQEAVECFQAAVTLEETMPVEPFR.

The interval 32–71 is disordered; sequence EQMRHREEEDKKSEVGVGRDYNGSSALSTAESENAKKLDN. Residues 33–45 are compositionally biased toward basic and acidic residues; that stretch reads QMRHREEEDKKSE. The span at 53-63 shows a compositional bias: polar residues; the sequence is NGSSALSTAES. TPR repeat units follow at residues 90-127, 162-195, 215-248, 465-498, 500-533, 536-569, 592-625, 626-659, and 697-733; these read EEAR…KMKT, FEAI…VETS, TKAV…HWKL, PRVV…GAES, LEVW…TGKW, GKLL…LQVQ, LGTW…APYS, SVRY…DPMH, and HSAW…EETM.

In terms of assembly, interacts with calmodulin in a calcium-dependent manner. In terms of tissue distribution, expressed in pollen, flowers and fruits.

This chain is Protein NPGR2, found in Arabidopsis thaliana (Mouse-ear cress).